We begin with the raw amino-acid sequence, 308 residues long: Methionyl-tRNA formyltransferase (308 aa).

(6S)-5,6,7,8-tetrahydrofolate is bound at residue serine 110–proline 113.

It belongs to the Fmt family.

The catalysed reaction is L-methionyl-tRNA(fMet) + (6R)-10-formyltetrahydrofolate = N-formyl-L-methionyl-tRNA(fMet) + (6S)-5,6,7,8-tetrahydrofolate + H(+). Attaches a formyl group to the free amino group of methionyl-tRNA(fMet). The formyl group appears to play a dual role in the initiator identity of N-formylmethionyl-tRNA by promoting its recognition by IF2 and preventing the misappropriation of this tRNA by the elongation apparatus. The protein is Methionyl-tRNA formyltransferase of Neisseria gonorrhoeae (strain ATCC 700825 / FA 1090).